Reading from the N-terminus, the 367-residue chain is GTP cyclohydrolase FolE2 (367 aa).

This sequence belongs to the GTP cyclohydrolase IV family.

The enzyme catalyses GTP + H2O = 7,8-dihydroneopterin 3'-triphosphate + formate + H(+). The protein operates within cofactor biosynthesis; 7,8-dihydroneopterin triphosphate biosynthesis; 7,8-dihydroneopterin triphosphate from GTP: step 1/1. Converts GTP to 7,8-dihydroneopterin triphosphate. This chain is GTP cyclohydrolase FolE2, found in Ruegeria sp. (strain TM1040) (Silicibacter sp.).